Here is a 160-residue protein sequence, read N- to C-terminus: H/ACA ribonucleoprotein complex subunit 2 (160 aa).

Ser-15 bears the Phosphoserine mark. Residue Thr-23 is modified to Phosphothreonine.

This sequence belongs to the eukaryotic ribosomal protein eL8 family. In terms of assembly, component of the box H/ACA small nucleolar ribonucleoprotein (H/ACA snoRNP) complex consisting of Nop60B, Gar1, NPH2 and Nop10, and associated with H/ACA-type snoRNAs.

The protein localises to the nucleus. It is found in the nucleolus. In terms of biological role, component of the box H/ACA small nucleolar ribonucleoprotein (H/ACA snoRNP) complex, which catalyzes pseudouridylation of rRNA. This involves the isomerization of uridine such that the ribose is subsequently attached to C5, instead of the normal N1. Pseudouridine ('psi') residues may serve to stabilize the conformation of rRNAs. Required for ribosome biogenesis. H/ACA snoRNP complex-dependent ribosome biogenesis is important in female germline cell differentiation during oogenesis. This Drosophila melanogaster (Fruit fly) protein is H/ACA ribonucleoprotein complex subunit 2.